A 153-amino-acid polypeptide reads, in one-letter code: Insulin-like growth factor 1 (153 aa).

The interval 49–77 (GPETLCGAELVDALQFVCGDRGFYFNKPT) is b. 3 disulfide bridges follow: Cys-54–Cys-96, Cys-66–Cys-109, and Cys-95–Cys-100. The interval 78–89 (GYGSSSRRAPQT) is c. The tract at residues 90–110 (GIVDECCFRSCDLRRLEMYCA) is a. Positions 111-118 (PLKPAKSA) are d. Positions 119–153 (RSVRAQRHTDMPKAQKEVHLKNASRGSAGNKNYRM) are cleaved as a propeptide — e peptide. Residues 120-153 (SVRAQRHTDMPKAQKEVHLKNASRGSAGNKNYRM) are disordered. Residues 125–138 (RHTDMPKAQKEVHL) show a composition bias toward basic and acidic residues. A compositionally biased stretch (polar residues) spans 142-153 (SRGSAGNKNYRM).

It belongs to the insulin family. In terms of assembly, forms a ternary complex with IGFR1 and ITGAV:ITGB3. Forms a ternary complex with IGFR1 and ITGA6:ITGB4. Forms a ternary complex with IGFBP3 and ALS.

It localises to the secreted. Its function is as follows. The insulin-like growth factors, isolated from plasma, are structurally and functionally related to insulin but have a much higher growth-promoting activity. May be a physiological regulator of [1-14C]-2-deoxy-D-glucose (2DG) transport and glycogen synthesis in osteoblasts. Stimulates glucose transport in bone-derived osteoblastic (PyMS) cells and is effective at much lower concentrations than insulin, not only regarding glycogen and DNA synthesis but also with regard to enhancing glucose uptake. May play a role in synapse maturation. Ca(2+)-dependent exocytosis of IGF1 is required for sensory perception of smell in the olfactory bulb. Acts as a ligand for IGF1R. Binds to the alpha subunit of IGF1R, leading to the activation of the intrinsic tyrosine kinase activity which autophosphorylates tyrosine residues in the beta subunit thus initiating a cascade of down-stream signaling events leading to activation of the PI3K-AKT/PKB and the Ras-MAPK pathways. Binds to integrins ITGAV:ITGB3 and ITGA6:ITGB4. Its binding to integrins and subsequent ternary complex formation with integrins and IGFR1 are essential for IGF1 signaling. Induces the phosphorylation and activation of IGFR1, MAPK3/ERK1, MAPK1/ERK2 and AKT1. As part of the MAPK/ERK signaling pathway, acts as a negative regulator of apoptosis in cardiomyocytes via promotion of STUB1/CHIP-mediated ubiquitination and degradation of ICER-type isoforms of CREM. This is Insulin-like growth factor 1 from Ailuropoda melanoleuca (Giant panda).